A 218-amino-acid polypeptide reads, in one-letter code: 3-isopropylmalate dehydratase small subunit (218 aa).

It belongs to the LeuD family. LeuD type 1 subfamily. As to quaternary structure, heterodimer of LeuC and LeuD.

It catalyses the reaction (2R,3S)-3-isopropylmalate = (2S)-2-isopropylmalate. The protein operates within amino-acid biosynthesis; L-leucine biosynthesis; L-leucine from 3-methyl-2-oxobutanoate: step 2/4. In terms of biological role, catalyzes the isomerization between 2-isopropylmalate and 3-isopropylmalate, via the formation of 2-isopropylmaleate. The chain is 3-isopropylmalate dehydratase small subunit from Alkalilimnicola ehrlichii (strain ATCC BAA-1101 / DSM 17681 / MLHE-1).